A 190-amino-acid chain; its full sequence is Elongation factor P 2 (190 aa).

It belongs to the elongation factor P family.

The protein localises to the cytoplasm. It functions in the pathway protein biosynthesis; polypeptide chain elongation. Functionally, involved in peptide bond synthesis. Stimulates efficient translation and peptide-bond synthesis on native or reconstituted 70S ribosomes in vitro. Probably functions indirectly by altering the affinity of the ribosome for aminoacyl-tRNA, thus increasing their reactivity as acceptors for peptidyl transferase. This chain is Elongation factor P 2 (efp2), found in Chlamydia trachomatis serovar D (strain ATCC VR-885 / DSM 19411 / UW-3/Cx).